The primary structure comprises 31 residues: Photosystem II reaction center protein T (31 aa).

The helical transmembrane segment at S3 to F23 threads the bilayer.

This sequence belongs to the PsbT family. PSII is composed of 1 copy each of membrane proteins PsbA, PsbB, PsbC, PsbD, PsbE, PsbF, PsbH, PsbI, PsbJ, PsbK, PsbL, PsbM, PsbT, PsbX, PsbY, PsbZ, Psb30/Ycf12, peripheral proteins PsbO, CyanoQ (PsbQ), PsbU, PsbV and a large number of cofactors. It forms dimeric complexes.

Its subcellular location is the cellular thylakoid membrane. Found at the monomer-monomer interface of the photosystem II (PS II) dimer, plays a role in assembly and dimerization of PSII. PSII is a light-driven water plastoquinone oxidoreductase, using light energy to abstract electrons from H(2)O, generating a proton gradient subsequently used for ATP formation. This chain is Photosystem II reaction center protein T, found in Picosynechococcus sp. (strain ATCC 27264 / PCC 7002 / PR-6) (Agmenellum quadruplicatum).